The sequence spans 1588 residues: MKLYVFLVNTGTTLTFDTELTVQTVADLKHAIQSKYKIAIQHQVLVVNGGECMAADRRVCTYSAGTDTNPIFLFNKEMILCDRAPAIPKATFSTENDMEIKVEESLMMPAVFHTVASRTQLAVEMYDVAKKLCSFCEGLVHDEHLQHQGWAAIMANLEDCSNSYQKLLFKFESIYSDYLQSIEDIKLKLTHLGTAVSVMAKIPLLECLTRHSYRECLGRPDSLNEHEGSEKAEMKRSTELVLSPDMPRTTNTSLVTSFHKSMEHVAPDPTGTERGKELRESCQSTVQQEEASVDAKDSDLPFFNVSLLDWINVQDRPNDVESLVRKCFDSMSRLDPKIIQPFMLECHQTIAKLDNQNMKAIKGLEDRLYALDQMIASCSRLVNEQKELAQGFLANQMRAENLKDASVLPDLCLSHANQLMIMLQNHRKLLDIKQKCTTAKQELANNLHVRLKWCCFVMLHADQDGEKLQALLRLVIELLERVRIVEALSTVPQMYCLAVVEVVRRKMFIKHYREWAGALVKDGKQLYEAEKSKRESFGKLFRKSFLRNRLFKGLDSWPSSFCTQKPRKFDCELPDISLKDLQFLQSFCPSEVQPFLRVPLLCDFEPLHQHVLALHNLVKAAQSLDEMSQTITDLLNEQKVSTSQASPQSAASPRIESTTGITTTTSPKTPPPLTVQDTLCPAVCPLEELSPDSIDAHTFDFETISHPNTEQPVHQASIDLDSLAESPESDFMSAVNEFVIEENLSSPNPISDPQSPEMMVESLYSSVINAIDSRRMQDTSTRGNEGFGDRAALHVQLEKCRAAAQDSHSSIQTIKDDLCHFRTFVQKEQCDLANYLKCTAVEIRNIIEKVKCSLEITLKEKHQQELQSLKIEYECKLDALVKDSEENVNKILKLKENLVSLEEALQNKDNEFTSIKHEKDAIVCVQQEKDQKLLEMEKIMHTQHCEIKELKQSREMALEDLKKLHDEKIESLRAEFQCLEQNHLKELEDTLHIRHTQEFEKVMTDHNMSLEKLKKENQQRIDQMLESHASTIQEKEQQLQELKLKVSDLSDMRCKLEVELALKEAETDEIKILLEESRTQQKEMLKSLLEQETENLRTEISKLNQKIHDNNESYQVGLSELRALMTIEKDQCISELISRHEEESNILKAELDNVTSLHRQAYEIEKKLKEQIVELQTRLNSELSALEKQKDEKITQQEEKYEALIQNLEKDKERLVKNHEQDKEHLIQELNFEKNKAVQTALDEFKVERELVEKELLEKVKHLENQIAKTPAFESAREDSSSLVAELQEKLQEEKAKFLEQLEEQEKRKNEEMQNVRTSLIAEQQTNFNTVLTREKMRKENIINDLSDKLKSTMQQQERDKDLIESLSEDRARLLEEKKQLEEEVSKLRTSSFLSSAPVAAAPELYGACAPELPGEPERSVMETADEGRLDSAMETSMMSVQENMLSEEKQRIMLLERTLQLKEEENKRLNQRLMSQSLSSVSSRHSEKIAIRDFQVGDLVLIILDERHDNYVLFTVSPTLYFLHSESLPALDLKPGEGASGASRRPWVLGKVMEKEYCQAKKAQNRFKVPLGTKFYRVKAVSWNKKV.

A phosphoserine mark is found at Ser222, Ser229, and Ser237. At Thr238 the chain carries Phosphothreonine. Ser243, Ser253, Ser257, and Ser261 each carry phosphoserine. Positions 565-568 match the Nuclear localization signal motif; that stretch reads KPRK. A phosphoserine mark is found at Ser623, Ser646, Ser649, Ser652, Ser733, Ser1087, Ser1366, and Ser1478. Positions 638-674 are disordered; that stretch reads QKVSTSQASPQSAASPRIESTTGITTTTSPKTPPPLT. Low complexity predominate over residues 643–667; it reads SQASPQSAASPRIESTTGITTTTSP. The FFAT signature appears at 730 to 736; that stretch reads DFMSAVN. 2 coiled-coil regions span residues 858–1393 and 1440–1479; these read LKEK…TSSF and SVQE…SQSL.

Part of a complex containing ATG13/KIAA0652, ULK1 and RB1CC1. This complex associates with ATG101. Interacts with PTK2/FAK1 and PTK2B/PYK2. Interacts with GABARAP and GABARAPL1. Interacts with ATG16L1; the interaction is required for ULK1 complex-dependent autophagy. Interacts with RNF111, SKI and SMAD7. Interacts with COP1 in the cytoplasm of proliferating cells in response to UV stimulation. Interacts with TP53. Interacts with C9orf72. Interacts with WDR45B. Interacts with ATG13; this interaction is increased in the absence of TMEM39A. Interacts with WIPI2. Interacts with TAX1BP1. Interacts (via phosphorylated FFAT motif) with MOSPD2. Phosphorylation at Ser-733 of the FFAT motif activates interaction with MOSPD2. Expressed abundantly in heart and testis, and moderately in kidney, liver and skeletal muscles. Very low expression levels in lung and spleen. Colocalizes with RB1 in various tissues.

The protein localises to the nucleus. It localises to the cytoplasm. It is found in the cytosol. Its subcellular location is the preautophagosomal structure. The protein resides in the lysosome. Its function is as follows. Involved in autophagy. Regulates early events but also late events of autophagosome formation through direct interaction with Atg16L1. Required for the formation of the autophagosome-like double-membrane structure that surrounds the Salmonella-containing vacuole (SCV) during S.typhimurium infection and subsequent xenophagy. Involved in repair of DNA damage caused by ionizing radiation, which subsequently improves cell survival by decreasing apoptosis. Inhibits PTK2/FAK1 and PTK2B/PYK2 kinase activity, affecting their downstream signaling pathways. Plays a role as a modulator of TGF-beta-signaling by restricting substrate specificity of RNF111. Functions as a DNA-binding transcription factor. Is a potent regulator of the RB1 pathway through induction of RB1 expression. Plays a crucial role in muscular differentiation. Plays an indispensable role in fetal hematopoiesis and in the regulation of neuronal homeostasis. In Mus musculus (Mouse), this protein is RB1-inducible coiled-coil protein 1.